The primary structure comprises 337 residues: ATP-dependent 6-phosphofructokinase (337 aa).

G11 serves as a coordination point for ATP. 21–25 (RAVVR) is a binding site for ADP. ATP is bound by residues 72–73 (RY) and 102–105 (GDGS). D103 serves as a coordination point for Mg(2+). 125-127 (TID) is a substrate binding site. D127 acts as the Proton acceptor in catalysis. R154 provides a ligand contact to ADP. Residues R162 and 169 to 171 (MGR) each bind substrate. ADP-binding positions include 185–187 (GAD), K212, and 214–216 (KNH). Substrate-binding positions include E223, R245, and 251–254 (HILR).

This sequence belongs to the phosphofructokinase type A (PFKA) family. ATP-dependent PFK group I subfamily. Prokaryotic clade 'B1' sub-subfamily. Homotetramer. Mg(2+) is required as a cofactor.

The protein resides in the cytoplasm. The enzyme catalyses beta-D-fructose 6-phosphate + ATP = beta-D-fructose 1,6-bisphosphate + ADP + H(+). It participates in carbohydrate degradation; glycolysis; D-glyceraldehyde 3-phosphate and glycerone phosphate from D-glucose: step 3/4. With respect to regulation, allosterically activated by ADP and other diphosphonucleosides, and allosterically inhibited by phosphoenolpyruvate. Catalyzes the phosphorylation of D-fructose 6-phosphate to fructose 1,6-bisphosphate by ATP, the first committing step of glycolysis. The chain is ATP-dependent 6-phosphofructokinase from Streptococcus pyogenes serotype M4 (strain MGAS10750).